A 238-amino-acid chain; its full sequence is tRNA (guanine-N(7)-)-methyltransferase (238 aa).

S-adenosyl-L-methionine is bound by residues E68, E93, D120, and D143. D143 is an active-site residue. Residues K147, D179, and 216-219 (TKFE) each bind substrate.

The protein belongs to the class I-like SAM-binding methyltransferase superfamily. TrmB family. Monomer.

It carries out the reaction guanosine(46) in tRNA + S-adenosyl-L-methionine = N(7)-methylguanosine(46) in tRNA + S-adenosyl-L-homocysteine. It participates in tRNA modification; N(7)-methylguanine-tRNA biosynthesis. Functionally, catalyzes the formation of N(7)-methylguanine at position 46 (m7G46) in tRNA. The sequence is that of tRNA (guanine-N(7)-)-methyltransferase from Edwardsiella ictaluri (strain 93-146).